The chain runs to 29 residues: Cycloviolacin-O15 (29 aa).

The cyclopeptide (Gly-Asn) cross-link spans 1–29; it reads GLVPCGETCFTGKCYTPGCSCSYPICKKN. Intrachain disulfides connect C5–C19, C9–C21, and C14–C26.

Post-translationally, this is a cyclic peptide.

In terms of biological role, probably participates in a plant defense mechanism. Has hemolytic activity. The sequence is that of Cycloviolacin-O15 from Viola odorata (Sweet violet).